We begin with the raw amino-acid sequence, 1151 residues long: UDP-N-acetylglucosamine--peptide N-acetylglucosaminyltransferase (1151 aa).

TPR repeat units lie at residues 125 to 158 (LKKV…DPNN), 193 to 226 (AEAY…KPEF), 227 to 260 (IDAY…NPDL), 261 to 294 (YCVR…QPQF), 295 to 328 (AVAW…DPNF), 329 to 362 (LDAY…SGNH), 363 to 396 (AVVH…QPHF), 397 to 430 (PDAY…CPTH), 431 to 464 (ADSQ…YPEF), 465 to 498 (AAAH…APTF), 499 to 532 (ADAY…NPAF), and 533 to 566 (ADAH…KPDF). The TPR 13; truncated repeat unit spans residues 567-577 (PDAYCNLAHCH). Residues 591 to 607 (RKLVQIVEDQLCKKRLP) carry the Nuclear localization signal motif. Histidine 612 acts as the Proton acceptor in catalysis. UDP is bound by residues glutamine 954, lysine 957, 1010–1013 (VAAK), 1016–1019 (HVRR), 1034–1036 (GHT), and aspartate 1040.

This sequence belongs to the glycosyltransferase 41 family. O-GlcNAc transferase subfamily.

Its subcellular location is the nucleus. It localises to the cytoplasm. It is found in the perinuclear region. It carries out the reaction L-seryl-[protein] + UDP-N-acetyl-alpha-D-glucosamine = 3-O-(N-acetyl-beta-D-glucosaminyl)-L-seryl-[protein] + UDP + H(+). It catalyses the reaction L-threonyl-[protein] + UDP-N-acetyl-alpha-D-glucosamine = 3-O-(N-acetyl-beta-D-glucosaminyl)-L-threonyl-[protein] + UDP + H(+). It participates in protein modification; protein glycosylation. Its function is as follows. Addition of nucleotide-activated sugars directly onto the polypeptide through O-glycosidic linkage with the hydroxyl of serine or threonine. Influences tap habituation in the mechanosensory neurons cell autonomously. The polypeptide is UDP-N-acetylglucosamine--peptide N-acetylglucosaminyltransferase (ogt-1) (Caenorhabditis elegans).